We begin with the raw amino-acid sequence, 275 residues long: Tryptophan synthase alpha chain (275 aa).

Active-site proton acceptor residues include glutamate 58 and aspartate 69.

Belongs to the TrpA family. In terms of assembly, tetramer of two alpha and two beta chains. Ubiquitously expressed at low levels in seedlings, roots, hypocotyls, cotyledons, stems, leaves, inflorescences, flowers, siliques and seeds.

It is found in the cytoplasm. The enzyme catalyses (1S,2R)-1-C-(indol-3-yl)glycerol 3-phosphate + L-serine = D-glyceraldehyde 3-phosphate + L-tryptophan + H2O. The catalysed reaction is (1S,2R)-1-C-(indol-3-yl)glycerol 3-phosphate = indole + D-glyceraldehyde 3-phosphate. Its pathway is amino-acid biosynthesis; L-tryptophan biosynthesis; L-tryptophan from chorismate: step 5/5. Its function is as follows. The alpha subunit is responsible for the aldol cleavage of indoleglycerol phosphate to indole and glyceraldehyde 3-phosphate. Contributes to the tryptophan-independent indole biosynthesis, and possibly to auxin production. The polypeptide is Tryptophan synthase alpha chain (TRPA1) (Arabidopsis thaliana (Mouse-ear cress)).